The primary structure comprises 32 residues: Phospholipase A2 (32 aa).

Ca(2+)-binding residues include Tyr-16, Gly-18, and Gly-20.

Ca(2+) serves as cofactor. As to expression, expressed by the venom gland.

The protein resides in the secreted. It catalyses the reaction a 1,2-diacyl-sn-glycero-3-phosphocholine + H2O = a 1-acyl-sn-glycero-3-phosphocholine + a fatty acid + H(+). In terms of biological role, PLA2 catalyzes the calcium-dependent hydrolysis of the 2-acyl groups in 3-sn-phosphoglycerides. The chain is Phospholipase A2 from Micrurus lemniscatus (South American coral snake).